The chain runs to 103 residues: Large ribosomal subunit protein bL21 (103 aa).

This sequence belongs to the bacterial ribosomal protein bL21 family. Part of the 50S ribosomal subunit. Contacts protein L20.

Its function is as follows. This protein binds to 23S rRNA in the presence of protein L20. The polypeptide is Large ribosomal subunit protein bL21 (Leptothrix cholodnii (strain ATCC 51168 / LMG 8142 / SP-6) (Leptothrix discophora (strain SP-6))).